A 413-amino-acid polypeptide reads, in one-letter code: Gamma-glutamyl phosphate reductase (413 aa).

This sequence belongs to the gamma-glutamyl phosphate reductase family.

It is found in the cytoplasm. The catalysed reaction is L-glutamate 5-semialdehyde + phosphate + NADP(+) = L-glutamyl 5-phosphate + NADPH + H(+). It participates in amino-acid biosynthesis; L-proline biosynthesis; L-glutamate 5-semialdehyde from L-glutamate: step 2/2. Catalyzes the NADPH-dependent reduction of L-glutamate 5-phosphate into L-glutamate 5-semialdehyde and phosphate. The product spontaneously undergoes cyclization to form 1-pyrroline-5-carboxylate. The protein is Gamma-glutamyl phosphate reductase of Thermus thermophilus (strain ATCC BAA-163 / DSM 7039 / HB27).